The sequence spans 337 residues: MKIAVDAMGGDHAPKEIVLGVMKAVAQYKDIEILLFGDETKINEHLTDKTRVKIIHTDEKIESDDEPVRAVKRKKKASMVLAAQAVKDGEADACISAGNTGALMSTGLFVIGRIKGIDRPALAPTLPTVTGKGFVMLDLGANAEAKPEHLLQFGLMGSVYAEKVRKIERPRVALLNIGTEETKGNELTKKSFELMKNQDAYEFIGNIEARDLLMDVADVVVTDGFTGNMVLKSIEGTGAAFLSMLKMSLLNGFKNKVAASFLKKDLMELKAKMDYSEYGGACLFGVQAPVVKAHGSSNANGIFTTIRQVREMVEKQVVETIKSEVDKVKVGGTETND.

The protein belongs to the PlsX family. Homodimer. Probably interacts with PlsY.

It is found in the cytoplasm. The catalysed reaction is a fatty acyl-[ACP] + phosphate = an acyl phosphate + holo-[ACP]. It functions in the pathway lipid metabolism; phospholipid metabolism. Functionally, catalyzes the reversible formation of acyl-phosphate (acyl-PO(4)) from acyl-[acyl-carrier-protein] (acyl-ACP). This enzyme utilizes acyl-ACP as fatty acyl donor, but not acyl-CoA. This chain is Phosphate acyltransferase, found in Listeria innocua serovar 6a (strain ATCC BAA-680 / CLIP 11262).